The following is a 611-amino-acid chain: Poly(3-hydroxyalkanoate) polymerase subunit PhaC (611 aa).

Cys-349 is a catalytic residue.

Belongs to the PHA/PHB synthase family. Type I PhaC subfamily. Monomer.

It localises to the cytoplasm. The enzyme catalyses (3R)-3-hydroxybutanoyl-CoA + [(3R)-hydroxybutanoate](n) = [(3R)-hydroxybutanoate](n+1) + CoA. It participates in biopolymer metabolism; poly-(R)-3-hydroxybutanoate biosynthesis. Functionally, polymerizes D(-)-3-hydroxybutyryl-CoA to create PHB which consists of thousands of hydroxybutyrate molecules linked end to end. PHB serves as an intracellular energy reserve material when cells grow under conditions of nutrient limitation. This is Poly(3-hydroxyalkanoate) polymerase subunit PhaC from Rhizobium meliloti (strain 1021) (Ensifer meliloti).